Here is a 501-residue protein sequence, read N- to C-terminus: MALGALLLILGILGTPLAPGARGSEAEGQLLKKLFSDYDSSVRPAQEVGDRVGVSIGLTLAQLISLNEKDEEMSTKVYLDLEWTDYRLSWDPAEHDGIESLRVTAESVWLPDVVLLNNNDGNFDVALDINVVVSFEGSVRWQPPGLYRSSCSIQVTYFPFDWQNCTMVFSSYSYDSSEVSLKTGPDPDGQERQEIYIHEGTFIENGQWEIIHKPSRLIHLPGDRRGGKEGHREEVIFYLIIRRKPLFYLVNVIAPCILITLLAIFVFYLPPDAGEKMGLSIFALLTLTVFLLLLADKVPETSLAVPIIIKYLMFTMILVTFSVILSVVVLNLHHRSPHTHQMPFWVRQIFIHKLPPYLGLKRPKPERDQLPEPHHSFSPRSGWGRGTDEYFIRKPPCDFLFPKLNRFQPESPAPDLRRFIDGPPRAVGLPQELREVISSISYMARQLQEQEDHDALKEDWQFVAMVVDRLFLWTFIVFTSVGTLVIFLDATYHLPPPEPFP.

An N-terminal signal peptide occupies residues 1–23; the sequence is MALGALLLILGILGTPLAPGARG. Residues 24–244 lie on the Extracellular side of the membrane; that stretch reads SEAEGQLLKK…VIFYLIIRRK (221 aa). An intrachain disulfide couples Cys151 to Cys165. An N-linked (GlcNAc...) asparagine glycan is attached at Asn164. 3 helical membrane passes run 245-269, 277-295, and 311-332; these read PLFY…VFYL, MGLS…LLLA, and YLMF…VLNL. Topologically, residues 333–469 are cytoplasmic; sequence HHRSPHTHQM…WQFVAMVVDR (137 aa). The tract at residues 362 to 381 is disordered; it reads RPKPERDQLPEPHHSFSPRS. The span at 363 to 375 shows a compositional bias: basic and acidic residues; the sequence is PKPERDQLPEPHH. A Phosphotyrosine; by Tyr-kinases modification is found at Tyr390. Residues 470–488 form a helical membrane-spanning segment; that stretch reads LFLWTFIVFTSVGTLVIFL.

This sequence belongs to the ligand-gated ion channel (TC 1.A.9) family. Acetylcholine receptor (TC 1.A.9.1) subfamily. Beta-1/CHRNB1 sub-subfamily. As to quaternary structure, pentamer of two alpha chains, and one each of the beta, delta, and gamma (in immature muscle) or epsilon (in mature muscle) chains. The muscle heteropentamer composed of alpha-1, beta-1, delta, epsilon subunits interacts with the alpha-conotoxin ImII.

The protein resides in the postsynaptic cell membrane. It is found in the cell membrane. The catalysed reaction is K(+)(in) = K(+)(out). It catalyses the reaction Na(+)(in) = Na(+)(out). Functionally, after binding acetylcholine, the AChR responds by an extensive change in conformation that affects all subunits and leads to opening of an ion-conducting channel across the plasma membrane. This chain is Acetylcholine receptor subunit beta (Chrnb1), found in Rattus norvegicus (Rat).